A 266-amino-acid chain; its full sequence is Imidazole glycerol phosphate synthase subunit HisF (266 aa).

Active-site residues include D11 and D130. Residues 134–157 form a disordered region; it reads RTPEEAARPGPDGAPRGEGWDVYS.

Belongs to the HisA/HisF family. In terms of assembly, heterodimer of HisH and HisF.

It localises to the cytoplasm. It catalyses the reaction 5-[(5-phospho-1-deoxy-D-ribulos-1-ylimino)methylamino]-1-(5-phospho-beta-D-ribosyl)imidazole-4-carboxamide + L-glutamine = D-erythro-1-(imidazol-4-yl)glycerol 3-phosphate + 5-amino-1-(5-phospho-beta-D-ribosyl)imidazole-4-carboxamide + L-glutamate + H(+). It participates in amino-acid biosynthesis; L-histidine biosynthesis; L-histidine from 5-phospho-alpha-D-ribose 1-diphosphate: step 5/9. Its function is as follows. IGPS catalyzes the conversion of PRFAR and glutamine to IGP, AICAR and glutamate. The HisF subunit catalyzes the cyclization activity that produces IGP and AICAR from PRFAR using the ammonia provided by the HisH subunit. This chain is Imidazole glycerol phosphate synthase subunit HisF, found in Paracidovorax citrulli (strain AAC00-1) (Acidovorax citrulli).